Consider the following 533-residue polypeptide: Basal body-orientation factor 1 (533 aa).

The interval 1–30 (MPAKDKRKDKRKDKRKGKNKGKEPKKIIKS) is disordered. Positions 7–19 (RKDKRKDKRKGKN) are enriched in basic residues. The segment covering 20 to 30 (KGKEPKKIIKS) has biased composition (basic and acidic residues). Coiled coils occupy residues 34–207 (AIER…EAEK) and 246–368 (LKEA…VEQF). The segment at 277–533 (VKEKIMQLTQ…PQGLQDSDIA (257 aa)) is interaction with MNS1 and ODF2. Positions 507–517 (QQAPVSDSNRM) are enriched in polar residues. Residues 507–533 (QQAPVSDSNRMVSPDVIPQGLQDSDIA) are disordered.

Belongs to the BBOF1 family. Interacts with MNS1 and ODF2. Expressed exclusively in the testis and predominantly expressed in male germ cells.

Its subcellular location is the cytoplasm. It is found in the cytoskeleton. It localises to the cilium basal body. The protein resides in the flagellum axoneme. Functionally, plays an essential role in sperm motility and male fertility by stabilizing the sperm flagellar axonemal structure. May be required for the stability of ODF2 and MANS1 proteins. Dispensable for the assembly and function of motile cilia. The sequence is that of Basal body-orientation factor 1 from Mus musculus (Mouse).